The sequence spans 151 residues: Metallothiol transferase FosB (151 aa).

The VOC domain maps to Ser-4 to Gly-119. Mg(2+)-binding residues include His-7, His-66, and Glu-115. Glu-115 (proton donor/acceptor) is an active-site residue.

This sequence belongs to the fosfomycin resistance protein family. FosB subfamily. In terms of assembly, homodimer. Mg(2+) serves as cofactor.

The protein localises to the cytoplasm. In terms of biological role, metallothiol transferase which confers resistance to fosfomycin by catalyzing the addition of a thiol cofactor to fosfomycin. L-cysteine is probably the physiological thiol donor. The polypeptide is Metallothiol transferase FosB (Staphylococcus saprophyticus subsp. saprophyticus (strain ATCC 15305 / DSM 20229 / NCIMB 8711 / NCTC 7292 / S-41)).